Here is a 204-residue protein sequence, read N- to C-terminus: uncharacterized protein (204 aa).

A run of 6 helical transmembrane segments spans residues threonine 19–leucine 39, alanine 42–alanine 62, glycine 78–isoleucine 98, proline 116–alanine 136, glycine 143–isoleucine 163, and alanine 167–valine 187.

Belongs to the acetate uptake transporter (AceTr) (TC 2.A.96) family.

It localises to the cell membrane. This is an uncharacterized protein from Methanothermobacter thermautotrophicus (strain ATCC 29096 / DSM 1053 / JCM 10044 / NBRC 100330 / Delta H) (Methanobacterium thermoautotrophicum).